A 349-amino-acid chain; its full sequence is AdoMet-dependent heme synthase (349 aa).

Residues 5–214 enclose the Radical SAM core domain; that stretch reads TNAPRLIAWE…LHWFYEMQKE (210 aa). Residues C19, C23, and C26 each contribute to the [4Fe-4S] cluster site.

The protein belongs to the radical SAM superfamily. Requires [4Fe-4S] cluster as cofactor.

It carries out the reaction Fe-coproporphyrin III + 2 S-adenosyl-L-methionine = heme b + 2 5'-deoxyadenosine + 2 L-methionine + 2 CO2. It participates in porphyrin-containing compound metabolism; protoheme biosynthesis. In terms of biological role, involved in siroheme-dependent heme b biosynthesis. Catalyzes the conversion of Fe-coproporphyrin III into heme by the oxidative decarboxylation of two propionate side chains. This chain is AdoMet-dependent heme synthase, found in Methanosarcina barkeri (strain Fusaro / DSM 804).